The primary structure comprises 1141 residues: Envelopment polyprotein (1141 aa).

The first 19 residues, 1–19 (MFCLCLSLLGLLLCWPAAT), serve as a signal peptide directing secretion. At 20–489 (RNLLELKVEC…CVPGLHGWAT (470 aa)) the chain is on the lumenal side. 6 disulfides stabilise this stretch: Cys29-Cys154, Cys63-Cys160, Cys112-Cys131, Cys136-Cys141, Cys178-Cys188, and Cys213-Cys252. A glycan (N-linked (GlcNAc...) asparagine; by host) is linked at Asn137. The N-linked (GlcNAc...) asparagine; by host glycan is linked to Asn352. 4 cysteine pairs are disulfide-bonded: Cys381–Cys440, Cys385–Cys394, Cys410–Cys429, and Cys457–Cys480. N-linked (GlcNAc...) asparagine; by host glycosylation is present at Asn404. A helical membrane pass occupies residues 490–510 (ISLLITFCFGWLAIPLLSMII). Residues 511-632 (IRFLLIFTYL…LSMFRYKSKC (122 aa)) lie on the Cytoplasmic side of the membrane. Positions 521–538 (CSKYSTDSKFKLIIEKVK) are binding to the ribonucleoprotein. 2 CCHC-type zinc fingers span residues 550 to 570 (CEVCQQGCETAKELESHKKSC) and 575 to 596 (CPYCLNPTEATESALQAHFKVC). Binding to the ribonucleoprotein stretches follow at residues 593–610 (FKVCKLTTRFQENLKKSL), 597–608 (KLTTRFQENLKK), and 616–630 (KRGLYRTLSMFRYKS). The tract at residues 612 to 653 (TYEPKRGLYRTLSMFRYKSKCYVGLVWCILLTMELIVWAASA) is inhibition of interferon induction. One can recognise an ITAM domain in the interval 616–639 (KRGLYRTLSMFRYKSKCYVGLVWC). A phosphotyrosine mark is found at Tyr620 and Tyr633. Residues 620-623 (YRTL) carry the YxxL motif. A helical transmembrane segment spans residues 633-653 (YVGLVWCILLTMELIVWAASA). Topologically, residues 654–1109 (ETINLEPGWT…EWLLGILSGN (456 aa)) are lumenal. Intrachain disulfides connect Cys740–Cys775, Cys744–Cys782, Cys756–Cys889, Cys770–Cys900, Cys785–Cys908, Cys811–Cys820, Cys828–Cys837, and Cys868–Cys872. The interval 762-782 (FEFETGWGCNPPDCPGVGTGC) is fusion loop. Asn932 is a glycosylation site (N-linked (GlcNAc...) asparagine; by host). Intrachain disulfides connect Cys974-Cys1004, Cys997-Cys1049, Cys1014-Cys1019, Cys1050-Cys1055, and Cys1089-Cys1093. Residues 1110–1130 (WMVVAVLIALFIFSLLLFSLC) traverse the membrane as a helical segment. A binding to the ribonucleoprotein region spans residues 1126-1141 (LFSLCCPRRQNYKKNK). Residues 1131-1141 (CPRRQNYKKNK) are Cytoplasmic-facing.

The protein belongs to the hantavirus envelope glycoprotein family. As to quaternary structure, homodimer. Homotetramer; forms heterotetrameric Gn-Gc spikes in the pre-fusion conformation. Interacts (via C-terminus) with the nucleoprotein. Interacts with host TUFM; this interaction contributes to the virus-induced degradation of mitochondria by autophagy, which leads to degradation of host MAVS and inhibition of type I interferon (IFN) responses. Interacts with host MAP1LC3B; this interaction contributes to the virus-induced degradation of mitochondria by autophagy, which leads to degradation of host MAVS and inhibition of type I interferon (IFN) responses. In terms of assembly, homodimer. Homotetramer; forms heterotetrameric Gn-Gc spikes in the pre-fusion conformation. Homotrimer; forms homotrimer in the post-fusion conformation at acidic pH. Interacts (via C-terminus) with the nucleoprotein. Envelope polyprotein precursor is quickly cleaved in vivo just after synthesis, presumably by host signal peptidase.

The protein localises to the virion membrane. It is found in the host cell surface. The protein resides in the host Golgi apparatus membrane. Its subcellular location is the host endoplasmic reticulum membrane. It localises to the host mitochondrion. Functionally, forms homotetramers with glycoprotein C at the surface of the virion. Attaches the virion to host cell receptors including integrin alpha5/ITGB1. This attachment induces virion internalization predominantly through clathrin-dependent endocytosis. Mediates the assembly and budding of infectious virus particles through its interaction with the nucleocapsid protein and the viral genome. May dysregulate normal immune and endothelial cell responses through an ITAM motif. Translocates to mitochondria, binds to host TUFM and recruits MAP1LC3B. These interactions induce mitochondrial autophagy and therefore destruction of host MAVS leading to inhibition of type I interferon (IFN) responses. Concomitant breakdown of glycoprotein N is apparently prevented by the nucleoprotein that may inhibit Gn-stimulated autophagosome-lysosome fusion. Interacts with the viral genomic RNA. Inhibits the host RIG-I/TBK1 pathway by disrupting the formation of TBK1-TRAF3 complexes and downstream signaling responses required for IFN-beta transcription. Its function is as follows. Forms homotetramers with glycoprotein N at the surface of the virion. Attaches the virion to host cell receptors including integrin ITGAV/ITGB3. This attachment induces virion internalization predominantly through clathrin-dependent endocytosis. Class II fusion protein that promotes fusion of viral membrane with host endosomal membrane after endocytosis of the virion. The polypeptide is Envelopment polyprotein (GP) (Tula orthohantavirus (TULV)).